We begin with the raw amino-acid sequence, 61 residues long: uncharacterized protein (61 aa).

2 helical membrane-spanning segments follow: residues F7–F24 and V29–L48.

It is found in the cell membrane. This is an uncharacterized protein from Bacillus subtilis (strain 168).